The sequence spans 258 residues: Protein SAWADEE HOMEODOMAIN HOMOLOG 1 (258 aa).

The SAWADEE domain stretch occupies residues 138–244 (AWYDVSSFLT…LVRYELDNTE (107 aa)). Zn(2+) contacts are provided by C191, H225, C230, and C232.

As to quaternary structure, associates with the RNA polymerase IV (Pol IV) complex. Interacts with NRPD1, NRPD2, NRPD3, NRPD3B, CLSY1 and CLSY2.

It localises to the nucleus. Its function is as follows. Involved in RNA-directed DNA methylation (RdDM). Required for the silencing of some endogenous RdDM targets and accumulation of 24-nt siRNAs, but not for the production of Pol V-dependent transcripts. Functions in transcriptional silencing through both DNA methylation-dependent and -independent pathways. Required for both maintenance and de-novo DNA methylation. Plays a role in the recruitment of Pol IV to genomic regions associated with K9 methylated histone H3 that are targets for RdDM. In Arabidopsis thaliana (Mouse-ear cress), this protein is Protein SAWADEE HOMEODOMAIN HOMOLOG 1 (SHH1).